Here is a 413-residue protein sequence, read N- to C-terminus: MADIPPDPPALNTTPANHAPPSPPPGSRKRRRPVLPSSSESEGKPDTESESSSTESSEDEAGDLRGGRRRSPRELGGRYFLDLSAESTTGTESEGTGPSDDDDDDASDGWLVDTPPRKSKRPRINLRLTSSPDRRAGVVFPEVWRSDRPIRAAQPQAPASLPGIAHAHRRSARQAQMRSGAAWTLDLHYIRQCVNQLFRILRAAPNPPGSANRLRHLVRDCYLMGYCRTRLGPRTWGRLLQISGGTWDVRLRNAIREVEAHFEPAAEPVCELPCLNARRYGPECDVGNLETNGGSTSDDEISDATDSDDTLASHSDTEGGPSPAGRENPESASGGAIAARLECEFGTFDWTSEEGSQPWLSAVVADTSSAERSGLPAPGACRATEAPEREDGCRKMRFPAACPYPCGHTFLRP.

The interval 1–124 (MADIPPDPPA…PPRKSKRPRI (124 aa)) is disordered. Over residues 62–76 (GDLRGGRRRSPRELG) the composition is skewed to basic and acidic residues. Residues 84–97 (SAESTTGTESEGTG) are compositionally biased toward low complexity. Tyr-189 carries the phosphotyrosine; by host modification. 2 disordered regions span residues 289–334 (LETN…SASG) and 370–390 (AERS…PERE). Positions 297–309 (SDDEISDATDSDD) are enriched in acidic residues.

It belongs to the herpesviridae ICP22 family. Post-translationally, tyrosine phosphorylated.

Its subcellular location is the host nucleus. It participates in protein modification; protein ubiquitination. Functions as an E3 ubiquitin ligase and plays a role in the inhibition of innate immunity by preventing IFN-mediated signaling. Induces the ubiquitination and degradation of host STAT1, STAT2 and IRF9, resulting in the blockade of ISGF3 nuclear translocation. The protein is E3 ubiquitin ligase ICP22 of Human herpesvirus 2 (strain HG52) (HHV-2).